The sequence spans 196 residues: Probable nicotinate-nucleotide adenylyltransferase (196 aa).

Belongs to the NadD family.

It carries out the reaction nicotinate beta-D-ribonucleotide + ATP + H(+) = deamido-NAD(+) + diphosphate. The protein operates within cofactor biosynthesis; NAD(+) biosynthesis; deamido-NAD(+) from nicotinate D-ribonucleotide: step 1/1. In terms of biological role, catalyzes the reversible adenylation of nicotinate mononucleotide (NaMN) to nicotinic acid adenine dinucleotide (NaAD). The protein is Probable nicotinate-nucleotide adenylyltransferase of Thermotoga sp. (strain RQ2).